We begin with the raw amino-acid sequence, 226 residues long: 7-cyano-7-deazaguanine synthase (226 aa).

9–19 (YSGGLDSTTCL) contacts ATP. Zn(2+)-binding residues include cysteine 189, cysteine 199, cysteine 202, and cysteine 205.

Belongs to the QueC family. Zn(2+) is required as a cofactor.

The catalysed reaction is 7-carboxy-7-deazaguanine + NH4(+) + ATP = 7-cyano-7-deazaguanine + ADP + phosphate + H2O + H(+). It participates in purine metabolism; 7-cyano-7-deazaguanine biosynthesis. Catalyzes the ATP-dependent conversion of 7-carboxy-7-deazaguanine (CDG) to 7-cyano-7-deazaguanine (preQ(0)). This Pelobacter propionicus (strain DSM 2379 / NBRC 103807 / OttBd1) protein is 7-cyano-7-deazaguanine synthase.